Reading from the N-terminus, the 277-residue chain is Large ribosomal subunit protein uL2 (277 aa).

The segment at 222–259 (GSVMNPNDHPHGGGEGKSPVGRPSPVTPWGKPALGYKT) is disordered.

It belongs to the universal ribosomal protein uL2 family. As to quaternary structure, part of the 50S ribosomal subunit. Forms a bridge to the 30S subunit in the 70S ribosome.

Functionally, one of the primary rRNA binding proteins. Required for association of the 30S and 50S subunits to form the 70S ribosome, for tRNA binding and peptide bond formation. It has been suggested to have peptidyltransferase activity; this is somewhat controversial. Makes several contacts with the 16S rRNA in the 70S ribosome. The sequence is that of Large ribosomal subunit protein uL2 from Clostridium beijerinckii (strain ATCC 51743 / NCIMB 8052) (Clostridium acetobutylicum).